A 354-amino-acid chain; its full sequence is Tyrosine recombinase XerH (354 aa).

One can recognise a Core-binding (CB) domain in the interval 48–134; the sequence is LTKGVKNIDE…AVINFFDFLD (87 aa). The region spanning 163 to 346 is the Tyr recombinase domain; it reads KLPEFMSKEE…DNDKLKLAAQ (184 aa). Catalysis depends on residues arginine 205, lysine 231, histidine 298, arginine 301, and histidine 324. The O-(3'-phospho-DNA)-tyrosine intermediate role is filled by tyrosine 333.

The protein belongs to the 'phage' integrase family. XerH subfamily.

The protein localises to the cytoplasm. With respect to regulation, ftsK is required for efficient recombination. Functionally, site-specific tyrosine recombinase, which acts by catalyzing the cutting and rejoining of the recombining DNA molecules. Binds to the complete atypical dif motif (difH) site and to both halves separately. This is Tyrosine recombinase XerH from Campylobacter jejuni subsp. jejuni serotype O:2 (strain ATCC 700819 / NCTC 11168).